The following is a 207-amino-acid chain: dTTP/UTP pyrophosphatase (207 aa).

The active-site Proton acceptor is the Asp-68.

Belongs to the Maf family. YhdE subfamily. The cofactor is a divalent metal cation.

The protein resides in the cytoplasm. The enzyme catalyses dTTP + H2O = dTMP + diphosphate + H(+). The catalysed reaction is UTP + H2O = UMP + diphosphate + H(+). Functionally, nucleoside triphosphate pyrophosphatase that hydrolyzes dTTP and UTP. May have a dual role in cell division arrest and in preventing the incorporation of modified nucleotides into cellular nucleic acids. This chain is dTTP/UTP pyrophosphatase, found in Staphylothermus marinus (strain ATCC 43588 / DSM 3639 / JCM 9404 / F1).